The chain runs to 154 residues: Protein X (154 aa).

Residues 68–117 (PCALRFTSARCMATTVNAHQILPKVLHKRTLGLPAMSTTDLEAYFKDCLF) are mitochondrial targeting sequence.

The protein belongs to the orthohepadnavirus protein X family. May form homodimer. May interact with host CEBPA, CFLAR, CREB1, DDB1, E4F1, HBXIP, HSPD1/HSP60, NFKBIA, POLR2E and SMAD4. Interacts with host SMC5-SMC6 complex and induces its degradation. Interacts with host TRPC4AP; leading to prevent ubiquitination of TRPC4AP. Interacts with host PLSCR1; this interaction promotes ubiquitination and degradation of HBx and impairs HBx-mediated cell proliferation. Post-translationally, a fraction may be phosphorylated in insect cells and HepG2 cells, a human hepatoblastoma cell line. Phosphorylated in vitro by host protein kinase C or mitogen-activated protein kinase. N-acetylated in insect cells.

The protein resides in the host cytoplasm. It localises to the host nucleus. The protein localises to the host mitochondrion. Multifunctional protein that plays a role in silencing host antiviral defenses and promoting viral transcription. Does not seem to be essential for HBV infection. May be directly involved in development of cirrhosis and liver cancer (hepatocellular carcinoma). Most of cytosolic activities involve modulation of cytosolic calcium. The effect on apoptosis is controversial depending on the cell types in which the studies have been conducted. May induce apoptosis by localizing in mitochondria and causing loss of mitochondrial membrane potential. May also modulate apoptosis by binding host CFLAR, a key regulator of the death-inducing signaling complex (DISC). Promotes viral transcription by using the host E3 ubiquitin ligase DDB1 to target the SMC5-SMC6 complex to proteasomal degradation. This host complex would otherwise bind to viral episomal DNA, and prevents its transcription. Moderately stimulates transcription of many different viral and cellular transcription elements. Promoters and enhancers stimulated by HBx contain DNA binding sites for NF-kappa-B, AP-1, AP-2, c-EBP, ATF/CREB, or the calcium-activated factor NF-AT. The protein is Protein X of Hepatitis B virus genotype A3 (isolate Cameroon/CMR983/1994) (HBV-A).